Consider the following 465-residue polypeptide: GTPase Der (465 aa).

2 consecutive EngA-type G domains span residues P3 to G167 and I179 to N352. GTP contacts are provided by residues G9–S16, D57–I61, N119–D122, G185–S192, D232–L236, and N297–D300. One can recognise a KH-like domain in the interval K353–T437.

Belongs to the TRAFAC class TrmE-Era-EngA-EngB-Septin-like GTPase superfamily. EngA (Der) GTPase family. In terms of assembly, associates with the 50S ribosomal subunit.

Functionally, GTPase that plays an essential role in the late steps of ribosome biogenesis. The protein is GTPase Der of Stenotrophomonas maltophilia (strain K279a).